A 640-amino-acid polypeptide reads, in one-letter code: Threonine--tRNA ligase (640 aa).

The 61-residue stretch at 1 to 61 (MPAITLPDGS…DADARLRFIT (61 aa)) folds into the TGS domain. The interval 243–536 (DHRKIGRQMD…LIENCAGRFP (294 aa)) is catalytic. 3 residues coordinate Zn(2+): Cys336, His387, and His513.

Belongs to the class-II aminoacyl-tRNA synthetase family. As to quaternary structure, homodimer. It depends on Zn(2+) as a cofactor.

It localises to the cytoplasm. The enzyme catalyses tRNA(Thr) + L-threonine + ATP = L-threonyl-tRNA(Thr) + AMP + diphosphate + H(+). Functionally, catalyzes the attachment of threonine to tRNA(Thr) in a two-step reaction: L-threonine is first activated by ATP to form Thr-AMP and then transferred to the acceptor end of tRNA(Thr). Also edits incorrectly charged L-seryl-tRNA(Thr). The sequence is that of Threonine--tRNA ligase from Acidiphilium cryptum (strain JF-5).